Reading from the N-terminus, the 663-residue chain is DNA topoisomerase 4 subunit B (663 aa).

ATP contacts are provided by residues Tyr7, Asn47, Asp74, 114-120, and Lys341; that span reads GLHGVGA. Residues 386-418 form a disordered region; that stretch reads REAARKAREDARSGKKNKRKDTLLSGKLTPAQS. The span at 387–398 shows a compositional bias: basic and acidic residues; the sequence is EAARKAREDARS. A Toprim domain is found at 424–538; that stretch reads NELYLVEGDS…AGRVFIALPP (115 aa). Mg(2+)-binding residues include Glu430, Asp503, and Asp505.

This sequence belongs to the type II topoisomerase family. ParE type 2 subfamily. Heterotetramer composed of ParC and ParE. Requires Mg(2+) as cofactor. It depends on Mn(2+) as a cofactor. The cofactor is Ca(2+).

It carries out the reaction ATP-dependent breakage, passage and rejoining of double-stranded DNA.. Functionally, topoisomerase IV is essential for chromosome segregation. It relaxes supercoiled DNA. Performs the decatenation events required during the replication of a circular DNA molecule. This Staphylococcus aureus (strain MRSA252) protein is DNA topoisomerase 4 subunit B.